The following is a 280-amino-acid chain: Manganese import system permease protein ScaB (280 aa).

The next 8 helical transmembrane spans lie at 18 to 38, 61 to 81, 94 to 114, 139 to 159, 174 to 194, 196 to 216, 222 to 242, and 246 to 266; these read ALIT…FIIL, ILGI…SILI, TAIG…IGVA, TIGV…PLLL, VKIY…TAMQ, VGTI…YLYA, MMLL…FIGY, and IAVG…SFFI.

It belongs to the ABC-3 integral membrane protein family.

It localises to the cell membrane. Part of an ABC transporter complex involved in manganese import. The sequence is that of Manganese import system permease protein ScaB from Streptococcus parasanguinis.